Here is a 221-residue protein sequence, read N- to C-terminus: Enolase-phosphatase E1 (221 aa).

Mg(2+) contacts are provided by D9 and E11. Substrate is bound by residues 116 to 117 and K152; that span reads SS. D180 is a binding site for Mg(2+).

Belongs to the HAD-like hydrolase superfamily. MasA/MtnC family. Monomer. Requires Mg(2+) as cofactor.

The protein resides in the cytoplasm. Its subcellular location is the nucleus. The enzyme catalyses 5-methylsulfanyl-2,3-dioxopentyl phosphate + H2O = 1,2-dihydroxy-5-(methylsulfanyl)pent-1-en-3-one + phosphate. The protein operates within amino-acid biosynthesis; L-methionine biosynthesis via salvage pathway; L-methionine from S-methyl-5-thio-alpha-D-ribose 1-phosphate: step 3/6. It participates in amino-acid biosynthesis; L-methionine biosynthesis via salvage pathway; L-methionine from S-methyl-5-thio-alpha-D-ribose 1-phosphate: step 4/6. In terms of biological role, bifunctional enzyme that catalyzes the enolization of 2,3-diketo-5-methylthiopentyl-1-phosphate (DK-MTP-1-P) into the intermediate 2-hydroxy-3-keto-5-methylthiopentenyl-1-phosphate (HK-MTPenyl-1-P), which is then dephosphorylated to form the acireductone 1,2-dihydroxy-3-keto-5-methylthiopentene (DHK-MTPene). The sequence is that of Enolase-phosphatase E1 from Kluyveromyces lactis (strain ATCC 8585 / CBS 2359 / DSM 70799 / NBRC 1267 / NRRL Y-1140 / WM37) (Yeast).